The sequence spans 201 residues: Eukaryotic translation initiation factor 4E-5 (201 aa).

Cys122 and Cys126 form a disulfide bridge.

The protein belongs to the eukaryotic initiation factor 4E family. In terms of assembly, eIF4F is a multi-subunit complex, the composition of which varies with external and internal environmental conditions. It is composed of at least eIF4A, eIF4E and eIF4G. eIF4E is also known to interact with other partners. As to expression, enriched in the germline.

Recognizes and binds the 7-methylguanosine-containing mRNA cap during an early step in the initiation of protein synthesis and facilitates ribosome binding by inducing the unwinding of the mRNAs secondary structures. All 5 eIF4E proteins bind monomethyl cap structures. Only ife-1, ife-2 and ife-5 bind trimethyl cap structures which result from trans-splicing. Translation of trimethyl cap structure mRNAs may be regulated by intracellular redox state; disulfide bonds change the width and depth of the cap-binding cavity determining selectivity to mRNA caps. This is Eukaryotic translation initiation factor 4E-5 (ife-5) from Caenorhabditis elegans.